Consider the following 333-residue polypeptide: Homocysteine S-methyltransferase 2 (333 aa).

The region spanning 8–327 is the Hcy-binding domain; sequence SMKDFLKQTG…TTIRAIHKRL (320 aa). Cys245, Cys312, and Cys313 together coordinate Zn(2+).

Monomer. It depends on Zn(2+) as a cofactor. In terms of tissue distribution, expressed predominantly in roots. Expressed in rosette leaves, cauline leaves and developing seeds.

It carries out the reaction S-methyl-L-methionine + L-homocysteine = 2 L-methionine + H(+). In terms of biological role, catalyzes methyl transfer from S-methylmethionine (SMM) to adenosyl-L-homocysteine (AdoMet). SMM degradation (by HMT-1, HMT-2 and HMT-3) and biosynthesis (by MMT1) constitute the SMM cycle in plants, which is probably required to achieve short term control of AdoMet level. The sequence is that of Homocysteine S-methyltransferase 2 (HMT-2) from Arabidopsis thaliana (Mouse-ear cress).